A 656-amino-acid polypeptide reads, in one-letter code: Heat shock 70 kDa protein, mitochondrial (656 aa).

The N-terminal 23 residues, 1 to 23, are a transit peptide targeting the mitochondrion; that stretch reads MFARRLRGAGSLAAASLARWQSS. The disordered stretch occupies residues 624–656; that stretch reads EYQQAAAGNSSSSSGNTDSSQGEQQQQGDQQKQ. Over residues 626-656 the composition is skewed to low complexity; the sequence is QQAAAGNSSSSSGNTDSSQGEQQQQGDQQKQ.

It belongs to the heat shock protein 70 family.

Its subcellular location is the mitochondrion matrix. It localises to the kinetoplast. May participate in eukaryotic mitochondrial DNA replication. The sequence is that of Heat shock 70 kDa protein, mitochondrial (MTP70) from Trypanosoma cruzi.